Consider the following 254-residue polypeptide: Uracil-DNA glycosylase (254 aa).

Asp-78 functions as the Proton acceptor in the catalytic mechanism.

This sequence belongs to the uracil-DNA glycosylase (UDG) superfamily. UNG family.

The protein localises to the cytoplasm. The catalysed reaction is Hydrolyzes single-stranded DNA or mismatched double-stranded DNA and polynucleotides, releasing free uracil.. In terms of biological role, excises uracil residues from the DNA which can arise as a result of misincorporation of dUMP residues by DNA polymerase or due to deamination of cytosine. The chain is Uracil-DNA glycosylase from Bordetella petrii (strain ATCC BAA-461 / DSM 12804 / CCUG 43448).